A 436-amino-acid chain; its full sequence is Trigger factor (436 aa).

A PPIase FKBP-type domain is found at 163 to 248 (GDRVTVDFEG…LKKIEAAHLP (86 aa)).

Belongs to the FKBP-type PPIase family. Tig subfamily.

The protein resides in the cytoplasm. It carries out the reaction [protein]-peptidylproline (omega=180) = [protein]-peptidylproline (omega=0). Functionally, involved in protein export. Acts as a chaperone by maintaining the newly synthesized protein in an open conformation. Functions as a peptidyl-prolyl cis-trans isomerase. The chain is Trigger factor from Albidiferax ferrireducens (strain ATCC BAA-621 / DSM 15236 / T118) (Rhodoferax ferrireducens).